A 220-amino-acid chain; its full sequence is Ribosome maturation factor RimP (220 aa).

A compositionally biased stretch (low complexity) spans 1–15 (MSQRGRATRPTGPTG). Disordered regions lie at residues 1–35 (MSQRGRATRPTGPTGRPRRTGGQRSAGRVSRGGDL) and 184–220 (PGRVQVEFTRPGETDGADGADEAGDFDDDDDVEGEER). A compositionally biased stretch (acidic residues) spans 198–220 (DGADGADEAGDFDDDDDVEGEER).

Belongs to the RimP family.

The protein localises to the cytoplasm. Functionally, required for maturation of 30S ribosomal subunits. The chain is Ribosome maturation factor RimP from Salinispora tropica (strain ATCC BAA-916 / DSM 44818 / JCM 13857 / NBRC 105044 / CNB-440).